The sequence spans 241 residues: uncharacterized protein (241 aa).

The next 5 membrane-spanning stretches (helical) occupy residues 7-27 (LIFLLFVIVVSYIFNGLWSVF), 37-57 (LFLLIAFHPQHLDGLIILLLI), 72-92 (IIALVGILLTIIKGVIKSGFG), 110-130 (INLVVFSILLTSVYVLGYVAF), and 138-158 (FGTLYTAFGGLALLGAGIKII).

Its subcellular location is the cell membrane. This is an uncharacterized protein from Methanocaldococcus jannaschii (strain ATCC 43067 / DSM 2661 / JAL-1 / JCM 10045 / NBRC 100440) (Methanococcus jannaschii).